The following is a 95-amino-acid chain: Small ubiquitin-related modifier 2 (95 aa).

Lysine 11 participates in a covalent cross-link: Glycyl lysine isopeptide (Lys-Gly) (interchain with G-Cter in SUMO). The Ubiquitin-like domain maps to 16 to 95; the sequence is DHINLKVAGQ…VFQQQTGGSF (80 aa). Glycine 93 is covalently cross-linked (Glycyl lysine isopeptide (Gly-Lys) (interchain with K-? in acceptor proteins)). A propeptide spanning residues 94 to 95 is cleaved from the precursor; it reads SF.

It belongs to the ubiquitin family. SUMO subfamily. As to quaternary structure, interacts with sae2 and ube2i. Covalently attached to a number of proteins, including top2. In terms of processing, polymeric chains can be formed through Lys-11 cross-linking. Post-translationally, cleavage of precursor form by a sentrin-specific protease is necessary for function.

The protein resides in the nucleus. Functionally, ubiquitin-like protein that can be covalently attached to proteins as a monomer or as a lysine-linked polymer. Covalent attachment via an isopeptide bond to its substrates requires prior activation by the E1 complex sae1-sae2 and linkage to the E2 enzyme ube2i, and can be promoted by an E3 ligase such as pias1-4. This post-translational modification on lysine residues of proteins plays a crucial role in a number of cellular processes such as nuclear transport, DNA replication and repair, mitosis and signal transduction. Polymeric sumo2 chains are also susceptible to polyubiquitination which functions as a signal for proteasomal degradation of modified proteins. In Xenopus tropicalis (Western clawed frog), this protein is Small ubiquitin-related modifier 2 (sumo2).